Here is a 1044-residue protein sequence, read N- to C-terminus: Ribonucleoside-diphosphate reductase subunit alpha (1044 aa).

ATP-cone domains lie at 9–111 (YTIV…KAER), 118–217 (IAII…ARAR), and 235–325 (YVVQ…ETLG). Residues Thr-440, 455–456 (SC), Gly-484, 668–672 (NLCTE), and 855–859 (PTATI) each bind substrate. A disulfide bridge links Cys-456 with Cys-685. Catalysis depends on Asn-668, which acts as the Proton acceptor. The active-site Cysteine radical intermediate is Cys-670. Glu-672 (proton acceptor) is an active-site residue.

This sequence belongs to the ribonucleoside diphosphate reductase large chain family. As to quaternary structure, tetramer of two alpha and two beta subunits.

It catalyses the reaction a 2'-deoxyribonucleoside 5'-diphosphate + [thioredoxin]-disulfide + H2O = a ribonucleoside 5'-diphosphate + [thioredoxin]-dithiol. Its activity is regulated as follows. Under complex allosteric control mediated by deoxynucleoside triphosphates and ATP binding. The type of nucleotide bound at the specificity site determines substrate preference. It seems probable that ATP makes the enzyme reduce CDP and UDP, dGTP favors ADP reduction and dTTP favors GDP reduction. Functionally, provides the precursors necessary for DNA synthesis. Catalyzes the biosynthesis of deoxyribonucleotides from the corresponding ribonucleotides. This chain is Ribonucleoside-diphosphate reductase subunit alpha (nrdA), found in Chlamydia pneumoniae (Chlamydophila pneumoniae).